Reading from the N-terminus, the 813-residue chain is Xaa-Pro dipeptidyl-peptidase (813 aa).

Catalysis depends on charge relay system residues S375, D495, and H526.

This sequence belongs to the peptidase S15 family. Homodimer.

The protein resides in the cytoplasm. The enzyme catalyses Hydrolyzes Xaa-Pro-|- bonds to release unblocked, N-terminal dipeptides from substrates including Ala-Pro-|-p-nitroanilide and (sequentially) Tyr-Pro-|-Phe-Pro-|-Gly-Pro-|-Ile.. Removes N-terminal dipeptides sequentially from polypeptides having unsubstituted N-termini provided that the penultimate residue is proline. The protein is Xaa-Pro dipeptidyl-peptidase of Lactiplantibacillus plantarum (strain ATCC BAA-793 / NCIMB 8826 / WCFS1) (Lactobacillus plantarum).